The chain runs to 422 residues: Roquefortine prenyltransferase roqD (422 aa).

Residue Glu100 participates in substrate binding. Dimethylallyl diphosphate contacts are provided by Arg113, Lys200, and Tyr202. Position 204 (Tyr204) interacts with substrate. Lys268, Tyr270, Tyr353, Tyr416, and Tyr420 together coordinate dimethylallyl diphosphate.

This sequence belongs to the tryptophan dimethylallyltransferase family.

It participates in alkaloid biosynthesis. Roquefortine prenyltransferase; part of the gene cluster that mediates the biosynthesis of the mycotoxins roquefortine C and meleagrin. The first stage is catalyzed by the dipeptide synthase roqA which condenses histidine and tryptophan to produce histidyltryptophanyldiketopiperazine (HTD). HTD is then converted to roquefortine C through two possible pathways. In the first pathway, prenyltransferase roqD transforms HTD to the intermediate roquefortine D, which is in turn converted to roquefortine C by the cytochrome P450 monooxygenase roqR. In the second pathway, HTD is first converted to the intermediate dehydrohistidyltryptophanyldi-ketopiperazine (DHTD) by roqR which is then prenylated by roqD to form roquefortine C. Roquefortine C can be further transformed to meleagrin via three more reactions including oxydation to glandicolin A by roqM, which is further reduced to glandicoline B by roqO. Finally, glandicoline B is converted to meleagrin by the glandicoline B O-methyltransferase roqN. More studies identified further branching and additional metabolites produced by the roquefortine/meleagrin cluster, including roquefortine F, roquefortine L, roquefortine M, roquefortine N and neoxaline. This chain is Roquefortine prenyltransferase roqD, found in Penicillium rubens (strain ATCC 28089 / DSM 1075 / NRRL 1951 / Wisconsin 54-1255) (Penicillium chrysogenum).